Reading from the N-terminus, the 415-residue chain is Phosphoglycerate transport system transcriptional regulatory protein PgtA (415 aa).

Residues 7–121 (SILLIDDDVD…KLLILIEDAL (115 aa)) form the Response regulatory domain. 4-aspartylphosphate is present on Asp-56. One can recognise a Sigma-54 factor interaction domain in the interval 142–341 (LIGRSEWMNQ…LANAAELFAV (200 aa)). 170-177 (GEHGTGRM) is an ATP binding site. Positions 385-404 (INEVAEYLQIPRKKLYLRMK) form a DNA-binding region, H-T-H motif.

Phosphorylated by PgtB.

The protein resides in the cytoplasm. In terms of biological role, member of the two-component regulatory system PgtB/PgtA that regulates the inducible phosphoglycerate transport system. When activated by PgtB it acts in conjunction with sigma-54 as a transcriptional activator. The chain is Phosphoglycerate transport system transcriptional regulatory protein PgtA (pgtA) from Salmonella typhimurium (strain LT2 / SGSC1412 / ATCC 700720).